Here is an 891-residue protein sequence, read N- to C-terminus: Protein translocase subunit SecA 1 (891 aa).

Residues Gln86, 104–108 (GEGKT), and Asp493 contribute to the ATP site. The span at 845–873 (KQVAKPIEASHGDGNRKKAPVVKEKEAGR) shows a compositional bias: basic and acidic residues. The interval 845–891 (KQVAKPIEASHGDGNRKKAPVVKEKEAGRNDPCPCGSGKKYKKCCGE) is disordered. Cys877, Cys879, Cys888, and Cys889 together coordinate Zn(2+).

Belongs to the SecA family. As to quaternary structure, monomer and homodimer. Part of the essential Sec protein translocation apparatus which comprises SecA, SecYEG and auxiliary proteins SecDF. Other proteins may also be involved. Requires Zn(2+) as cofactor.

It is found in the cell membrane. It localises to the cytoplasm. It carries out the reaction ATP + H2O + cellular proteinSide 1 = ADP + phosphate + cellular proteinSide 2.. Part of the Sec protein translocase complex. Interacts with the SecYEG preprotein conducting channel. Has a central role in coupling the hydrolysis of ATP to the transfer of proteins into and across the cell membrane, serving as an ATP-driven molecular motor driving the stepwise translocation of polypeptide chains across the membrane. The chain is Protein translocase subunit SecA 1 from Alkaliphilus metalliredigens (strain QYMF).